Reading from the N-terminus, the 226-residue chain is UPF0758 protein SGO_1229 (226 aa).

The region spanning 103 to 225 (RILSSQKLAK…YYSYREETDL (123 aa)) is the MPN domain. Positions 174, 176, and 187 each coordinate Zn(2+). A JAMM motif motif is present at residues 174-187 (HNHPSGATRPSRDD).

This sequence belongs to the UPF0758 family.

The sequence is that of UPF0758 protein SGO_1229 from Streptococcus gordonii (strain Challis / ATCC 35105 / BCRC 15272 / CH1 / DL1 / V288).